A 745-amino-acid chain; its full sequence is Myeloperoxidase (745 aa).

A signal peptide spans 1–48 (MGVPFFSSLRCMVDLGPCWAGGLTAEMKLLLALAGLLAILATPQPSEG). An N-linked (GlcNAc...) asparagine glycan is attached at Asn139. The cysteines at positions 167 and 180 are disulfide-linked. Heme b is bound at residue Asp260. His261 functions as the Proton acceptor in the catalytic mechanism. Residue Asp262 coordinates Ca(2+). 2 disulfides stabilise this stretch: Cys281–Cys291 and Cys285–Cys309. Cys316 carries the post-translational modification Cysteine sulfenic acid (-SOH). An N-linked (GlcNAc...) asparagine glycan is attached at Asn323. Ca(2+) contacts are provided by Thr334, Phe336, Asp338, and Ser340. N-linked (GlcNAc...) asparagine glycans are attached at residues Asn355 and Asn391. Cys387 and Cys398 are joined by a disulfide. Heme b contacts are provided by Glu408 and Met409. Asn483 carries an N-linked (GlcNAc...) asparagine glycan. His502 provides a ligand contact to heme b. Intrachain disulfides connect Cys606–Cys663 and Cys704–Cys730. The N-linked (GlcNAc...) asparagine glycan is linked to Asn729.

Belongs to the peroxidase family. XPO subfamily. In terms of assembly, homodimer; disulfide-linked. Each monomer consists of a light and a heavy chain. Found in a complex with CP and LTF; interacts directly with CP, which protects CP antioxidant properties by MPO. The cofactor is Ca(2+). It depends on heme b as a cofactor.

Its subcellular location is the lysosome. It catalyses the reaction chloride + H2O2 + H(+) = hypochlorous acid + H2O. Functionally, part of the host defense system of polymorphonuclear leukocytes. It is responsible for microbicidal activity against a wide range of organisms. In the stimulated PMN, MPO catalyzes the production of hypohalous acids, primarily hypochlorous acid in physiologic situations, and other toxic intermediates that greatly enhance PMN microbicidal activity. Mediates the proteolytic cleavage of alpha-1-microglobulin to form t-alpha-1-microglobulin, which potently inhibits oxidation of low-density lipoprotein particles and limits vascular damage. This Homo sapiens (Human) protein is Myeloperoxidase.